A 376-amino-acid polypeptide reads, in one-letter code: tRNA-specific 2-thiouridylase MnmA (376 aa).

Residues 16 to 23 and L42 each bind ATP; that span reads AMSGGVDS. C111 serves as the catalytic Nucleophile. A disulfide bridge connects residues C111 and C210. G135 is a binding site for ATP. The segment at 158-160 is interaction with tRNA; sequence KDQ. The Cysteine persulfide intermediate role is filled by C210.

This sequence belongs to the MnmA/TRMU family.

It localises to the cytoplasm. The enzyme catalyses S-sulfanyl-L-cysteinyl-[protein] + uridine(34) in tRNA + AH2 + ATP = 2-thiouridine(34) in tRNA + L-cysteinyl-[protein] + A + AMP + diphosphate + H(+). Catalyzes the 2-thiolation of uridine at the wobble position (U34) of tRNA, leading to the formation of s(2)U34. This Streptomyces avermitilis (strain ATCC 31267 / DSM 46492 / JCM 5070 / NBRC 14893 / NCIMB 12804 / NRRL 8165 / MA-4680) protein is tRNA-specific 2-thiouridylase MnmA.